We begin with the raw amino-acid sequence, 139 residues long: Large ribosomal subunit protein bL17 (139 aa).

This sequence belongs to the bacterial ribosomal protein bL17 family. In terms of assembly, part of the 50S ribosomal subunit. Contacts protein L32.

This Afipia carboxidovorans (strain ATCC 49405 / DSM 1227 / KCTC 32145 / OM5) (Oligotropha carboxidovorans) protein is Large ribosomal subunit protein bL17.